Here is a 476-residue protein sequence, read N- to C-terminus: Angiotensinogen (476 aa).

The signal sequence occupies residues 1–24 (MAPAGVSLRATILCLVAWAGLAAG). N-linked (GlcNAc...) asparagine glycans are attached at residues N38, N161, N295, and N319. C42 and C162 are joined by a disulfide.

Belongs to the serpin family. In terms of processing, in response to low blood pressure, the enzyme renin/REN cleaves angiotensinogen to produce angiotensin-1. Angiotensin-1 is a substrate of ACE (angiotensin converting enzyme) that removes a dipeptide to yield the physiologically active peptide angiotensin-2. Angiotensin-1 and angiotensin-2 can be further processed to generate angiotensin-3, angiotensin-4. Angiotensin 1-9 is cleaved from angiotensin-1 by ACE2 and can be further processed by ACE to produce angiotensin 1-7, angiotensin 1-5 and angiotensin 1-4. Angiotensin 1-7 has also been proposed to be cleaved from angiotensin-2 by ACE2 or from angiotensin-1 by MME (neprilysin). Post-translationally, the disulfide bond is labile. Angiotensinogen is present in the circulation in a near 40:60 ratio with the oxidized disulfide-bonded form, which preferentially interacts with receptor-bound renin.

The protein resides in the secreted. Functionally, essential component of the renin-angiotensin system (RAS), a potent regulator of blood pressure, body fluid and electrolyte homeostasis. Its function is as follows. Acts directly on vascular smooth muscle as a potent vasoconstrictor, affects cardiac contractility and heart rate through its action on the sympathetic nervous system, and alters renal sodium and water absorption through its ability to stimulate the zona glomerulosa cells of the adrenal cortex to synthesize and secrete aldosterone. Acts by binding to angiotensin receptors AGTR1 and AGTR2. Also binds the DEAR/FBXW7-AS1 receptor. In terms of biological role, stimulates aldosterone release. Is a ligand for the G-protein coupled receptor MAS1. Has vasodilator and antidiuretic effects. Has an antithrombotic effect that involves MAS1-mediated release of nitric oxide from platelets. The chain is Angiotensinogen (AGT) from Pan troglodytes (Chimpanzee).